We begin with the raw amino-acid sequence, 556 residues long: Phosphomethylpyrimidine synthase (556 aa).

Residues Asn-191, Met-220, Tyr-249, His-285, 305 to 307 (SRG), 346 to 349 (DALR), and Glu-385 contribute to the substrate site. His-389 lines the Zn(2+) pocket. Residue Tyr-412 coordinates substrate. His-453 is a Zn(2+) binding site. [4Fe-4S] cluster contacts are provided by Cys-535, Cys-538, and Cys-543.

It belongs to the ThiC family. Requires [4Fe-4S] cluster as cofactor.

The catalysed reaction is 5-amino-1-(5-phospho-beta-D-ribosyl)imidazole + S-adenosyl-L-methionine = 4-amino-2-methyl-5-(phosphooxymethyl)pyrimidine + CO + 5'-deoxyadenosine + formate + L-methionine + 3 H(+). It participates in cofactor biosynthesis; thiamine diphosphate biosynthesis. Its function is as follows. Catalyzes the synthesis of the hydroxymethylpyrimidine phosphate (HMP-P) moiety of thiamine from aminoimidazole ribotide (AIR) in a radical S-adenosyl-L-methionine (SAM)-dependent reaction. In Chlorobaculum tepidum (strain ATCC 49652 / DSM 12025 / NBRC 103806 / TLS) (Chlorobium tepidum), this protein is Phosphomethylpyrimidine synthase.